Here is a 332-residue protein sequence, read N- to C-terminus: Holliday junction branch migration complex subunit RuvB (332 aa).

The large ATPase domain (RuvB-L) stretch occupies residues 1 to 181; sequence MARILDNDVM…FGITGHMEYY (181 aa). Residues leucine 20, arginine 21, glycine 62, lysine 65, threonine 66, threonine 67, 128-130, arginine 171, tyrosine 181, and arginine 218 contribute to the ATP site; that span reads EDF. Threonine 66 provides a ligand contact to Mg(2+). Residues 182-252 form a small ATPAse domain (RuvB-S) region; that stretch reads QEKDLTEIVE…ITDRALTMLD (71 aa). Positions 255 to 332 are head domain (RuvB-H); it reads REGLDYIDQK…RHLGYPYQNT (78 aa). The DNA site is built by arginine 291, arginine 310, arginine 312, and arginine 315.

The protein belongs to the RuvB family. Homohexamer. Forms an RuvA(8)-RuvB(12)-Holliday junction (HJ) complex. HJ DNA is sandwiched between 2 RuvA tetramers; dsDNA enters through RuvA and exits via RuvB. An RuvB hexamer assembles on each DNA strand where it exits the tetramer. Each RuvB hexamer is contacted by two RuvA subunits (via domain III) on 2 adjacent RuvB subunits; this complex drives branch migration. In the full resolvosome a probable DNA-RuvA(4)-RuvB(12)-RuvC(2) complex forms which resolves the HJ.

It is found in the cytoplasm. The enzyme catalyses ATP + H2O = ADP + phosphate + H(+). Functionally, the RuvA-RuvB-RuvC complex processes Holliday junction (HJ) DNA during genetic recombination and DNA repair, while the RuvA-RuvB complex plays an important role in the rescue of blocked DNA replication forks via replication fork reversal (RFR). RuvA specifically binds to HJ cruciform DNA, conferring on it an open structure. The RuvB hexamer acts as an ATP-dependent pump, pulling dsDNA into and through the RuvAB complex. RuvB forms 2 homohexamers on either side of HJ DNA bound by 1 or 2 RuvA tetramers; 4 subunits per hexamer contact DNA at a time. Coordinated motions by a converter formed by DNA-disengaged RuvB subunits stimulates ATP hydrolysis and nucleotide exchange. Immobilization of the converter enables RuvB to convert the ATP-contained energy into a lever motion, pulling 2 nucleotides of DNA out of the RuvA tetramer per ATP hydrolyzed, thus driving DNA branch migration. The RuvB motors rotate together with the DNA substrate, which together with the progressing nucleotide cycle form the mechanistic basis for DNA recombination by continuous HJ branch migration. Branch migration allows RuvC to scan DNA until it finds its consensus sequence, where it cleaves and resolves cruciform DNA. In Streptococcus pyogenes serotype M12 (strain MGAS9429), this protein is Holliday junction branch migration complex subunit RuvB.